The following is a 40-amino-acid chain: MKVRASVKRMCRNCKVIRRNGVVRVICSDARHKQRQKGGK.

Belongs to the bacterial ribosomal protein bL36 family.

The sequence is that of Large ribosomal subunit protein bL36 from Coxiella burnetii (strain Dugway 5J108-111).